The primary structure comprises 137 residues: Ribosome-binding factor A (137 aa).

Belongs to the RbfA family. Monomer. Binds 30S ribosomal subunits, but not 50S ribosomal subunits or 70S ribosomes.

It localises to the cytoplasm. Its function is as follows. One of several proteins that assist in the late maturation steps of the functional core of the 30S ribosomal subunit. Associates with free 30S ribosomal subunits (but not with 30S subunits that are part of 70S ribosomes or polysomes). Required for efficient processing of 16S rRNA. May interact with the 5'-terminal helix region of 16S rRNA. The sequence is that of Ribosome-binding factor A from Nitrobacter winogradskyi (strain ATCC 25391 / DSM 10237 / CIP 104748 / NCIMB 11846 / Nb-255).